Here is a 380-residue protein sequence, read N- to C-terminus: tRNA(Met) cytidine acetate ligase (380 aa).

ATP-binding positions include 7–20, G100, N153, and R178; that span reads ITEY…HLYH.

The protein belongs to the TmcAL family.

The protein resides in the cytoplasm. The enzyme catalyses cytidine(34) in elongator tRNA(Met) + acetate + ATP = N(4)-acetylcytidine(34) in elongator tRNA(Met) + AMP + diphosphate. Catalyzes the formation of N(4)-acetylcytidine (ac(4)C) at the wobble position of elongator tRNA(Met), using acetate and ATP as substrates. First activates an acetate ion to form acetyladenylate (Ac-AMP) and then transfers the acetyl group to tRNA to form ac(4)C34. In Staphylococcus haemolyticus (strain JCSC1435), this protein is tRNA(Met) cytidine acetate ligase.